A 104-amino-acid chain; its full sequence is uncharacterized protein (104 aa).

Positions 1–18 are cleaved as a signal peptide; that stretch reads MGVEGMWNVFLFSLQVAA. An N-linked (GlcNAc...) asparagine; by host glycan is attached at asparagine 27.

This is an uncharacterized protein from Fowl adenovirus A serotype 1 (strain CELO / Phelps) (FAdV-1).